The chain runs to 604 residues: Elongation factor 4 (604 aa).

The region spanning 8–190 is the tr-type G domain; sequence KNKRNFSIIA…AIVHRIPAPN (183 aa). GTP-binding positions include 20–25 and 137–140; these read DHGKST and NKID.

Belongs to the TRAFAC class translation factor GTPase superfamily. Classic translation factor GTPase family. LepA subfamily.

The protein localises to the cell inner membrane. The enzyme catalyses GTP + H2O = GDP + phosphate + H(+). Its function is as follows. Required for accurate and efficient protein synthesis under certain stress conditions. May act as a fidelity factor of the translation reaction, by catalyzing a one-codon backward translocation of tRNAs on improperly translocated ribosomes. Back-translocation proceeds from a post-translocation (POST) complex to a pre-translocation (PRE) complex, thus giving elongation factor G a second chance to translocate the tRNAs correctly. Binds to ribosomes in a GTP-dependent manner. This Fusobacterium nucleatum subsp. nucleatum (strain ATCC 25586 / DSM 15643 / BCRC 10681 / CIP 101130 / JCM 8532 / KCTC 2640 / LMG 13131 / VPI 4355) protein is Elongation factor 4.